The primary structure comprises 147 residues: Hemoglobin subunit beta-2 (147 aa).

Positions 3–147 constitute a Globin domain; it reads HWTAEEKAAI…LVDGLSQGYN (145 aa). His-64 and His-93 together coordinate heme b.

This sequence belongs to the globin family. Heterotetramer of two alpha chains and two beta chains. In terms of tissue distribution, red blood cells.

Involved in oxygen transport from the lung to the various peripheral tissues. The chain is Hemoglobin subunit beta-2 (hbb2) from Xenopus laevis (African clawed frog).